The primary structure comprises 323 residues: Phosphatidylglycerol--prolipoprotein diacylglyceryl transferase (323 aa).

The next 3 membrane-spanning stretches (helical) occupy residues 15–35 (VIQG…ILIS), 58–78 (FMFS…TLVY), and 106–126 (GMAI…TINT). Arginine 156 contributes to the a 1,2-diacyl-sn-glycero-3-phospho-(1'-sn-glycerol) binding site. 2 helical membrane passes run 242-262 (GFIF…IEYL) and 289-309 (ISMG…WIIV).

It belongs to the Lgt family.

The protein resides in the cell inner membrane. It carries out the reaction L-cysteinyl-[prolipoprotein] + a 1,2-diacyl-sn-glycero-3-phospho-(1'-sn-glycerol) = an S-1,2-diacyl-sn-glyceryl-L-cysteinyl-[prolipoprotein] + sn-glycerol 1-phosphate + H(+). It participates in protein modification; lipoprotein biosynthesis (diacylglyceryl transfer). In terms of biological role, catalyzes the transfer of the diacylglyceryl group from phosphatidylglycerol to the sulfhydryl group of the N-terminal cysteine of a prolipoprotein, the first step in the formation of mature lipoproteins. This chain is Phosphatidylglycerol--prolipoprotein diacylglyceryl transferase, found in Borreliella afzelii (strain PKo) (Borrelia afzelii).